Here is a 484-residue protein sequence, read N- to C-terminus: MHEKTVAEIAAALRAGEFSSREVTEAFLARIDALNPVTNAVITPTPEQALAAADAADQRIAAGEAGPLTGVPLVHKDIFCTQGVRTSCGSRMLDNFTAPYDATVVGKLADAGMVMLGKANMDEFAMGSSNETSYYGPVKNPWDLDAVPGGSSGGSAAAVAGRLAPAATGTDTGGSIRQPAALCGLSGLKPTYGRVSRYGMIAFASSLDQGGPMARTCEDLALLLGGMAGFDTRDSTSVDHVVPDYTETLNRSVKGLKIGVPKEFFGEGLDPEVRRVVEAAIEVYREEGAEIREISLPNTRHSVPVYYVIAPAEASSNLSRYDGVRYGYRCEDPSDLEDLYKRSRGEGFGEEVKRRILVGTYALSAGYYDAYYLKAQQVRRLIRDDFTRALQAVDVIMGPTSPTVAFNIGERTDDPVQMYLSDVYTLAVNLAGVPGLSIPAGFAQGRPVGLQIIGDYFDEARLLNVGHKYQQVTDWHRQVPQGFE.

Catalysis depends on charge relay system residues K76 and S151. The active-site Acyl-ester intermediate is S175.

This sequence belongs to the amidase family. GatA subfamily. In terms of assembly, heterotrimer of A, B and C subunits.

It carries out the reaction L-glutamyl-tRNA(Gln) + L-glutamine + ATP + H2O = L-glutaminyl-tRNA(Gln) + L-glutamate + ADP + phosphate + H(+). Functionally, allows the formation of correctly charged Gln-tRNA(Gln) through the transamidation of misacylated Glu-tRNA(Gln) in organisms which lack glutaminyl-tRNA synthetase. The reaction takes place in the presence of glutamine and ATP through an activated gamma-phospho-Glu-tRNA(Gln). The sequence is that of Glutamyl-tRNA(Gln) amidotransferase subunit A from Alkalilimnicola ehrlichii (strain ATCC BAA-1101 / DSM 17681 / MLHE-1).